The primary structure comprises 914 residues: Solute carrier family 12 member 9 (914 aa).

Residues 1-36 (MASESSPLLAYRLLGEEGVALPANGAGGPGGASARK) lie on the Cytoplasmic side of the membrane. Residue serine 6 is modified to Phosphoserine. A helical transmembrane segment spans residues 37–57 (LSTFLGVVVPTVLSMFSIVVF). The Extracellular portion of the chain corresponds to 58 to 72 (LRIGFVVGHAGLLQA). A helical membrane pass occupies residues 73 to 93 (LAMLLVAYFILALTVLSVCAI). The Cytoplasmic portion of the chain corresponds to 94–119 (ATNGAVQGGGAYFMISRTLGPEVGGS). A helical membrane pass occupies residues 120-140 (IGLMFYLANVCGCAVSLLGLV). At 141–167 (ESVLDVFGADATGPSGLRVLPQGYGWN) the chain is on the extracellular side. The helical transmembrane segment at 168–188 (LLYGSLLLGLVGGVCTLGAGL) threads the bilayer. Residues 189–193 (YARAS) lie on the Cytoplasmic side of the membrane. Residues 194-214 (FLTFLLVSGSLASVLISFVAV) form a helical membrane-spanning segment. Residues 215–262 (GPRDIRLTPRPGPNGSSLPPRFGHFTGFNSSTLKDNLGAGYAEDYTTG) are Extracellular-facing. N-linked (GlcNAc...) asparagine glycans are attached at residues asparagine 228 and asparagine 243. Residues 263 to 283 (AVMNFASVFAVLFNGCTGIMA) traverse the membrane as a helical segment. The Cytoplasmic segment spans residues 284 to 297 (GANMSGELKDPSRA). The helical transmembrane segment at 298-318 (IPLGTIVAVAYTFFVYVLLFF) threads the bilayer. At 319 to 338 (LSSFTCDRTLLQEDYGFFRA) the chain is on the extracellular side. The chain crosses the membrane as a helical span at residues 339–359 (ISLWPPLVLIGIYATALSASM). Over 360–390 (SSLIGASRILHALARDDLFGVILAPAKVVSR) the chain is Cytoplasmic. The helical transmembrane segment at 391–411 (GGNPWAAVLYSWGLVQLVLLA) threads the bilayer. Residues 412 to 416 (GKLNT) are Extracellular-facing. A helical transmembrane segment spans residues 417–437 (LAAVVTVFYLVAYAAVDLSCL). The Cytoplasmic segment spans residues 438-466 (SLEWASAPNFRPTFSLFSWHTCLLGVASC). A helical membrane pass occupies residues 467–487 (LLMMFLISPGAAGGSLLLMGL). At 488–740 (LAALLTARGG…LLRPRGGPGY (253 aa)) the chain is on the extracellular side. The interval 642–678 (LTDPAFSEPADSTREGSSPALSTLFPPPRAPGSPRAL) is disordered. A helical membrane pass occupies residues 741-761 (VDVCGLFLLQMATILGMVPAW). The Cytoplasmic segment spans residues 762 to 914 (HSARLRIFLC…GVTPVTCTDL (153 aa)). Residues 844–863 (QQGRGTGGGPGGPEGGDAEG) are disordered. Positions 847-858 (RGTGGGPGGPEG) are enriched in gly residues.

The protein belongs to the SLC12A transporter family. Interacts with SLC12A1. In terms of tissue distribution, highly expressed in placenta, brain and kidney. Lower expression in lung, liver and heart.

Its subcellular location is the cell membrane. It is found in the lysosome membrane. Functionally, may be an inhibitor of SLC12A1. Seems to correspond to a subunit of a multimeric transport system and thus, additional subunits may be required for its function. May play a role in lysosomal ion flux and osmoregulation. This Homo sapiens (Human) protein is Solute carrier family 12 member 9 (SLC12A9).